The chain runs to 314 residues: MKQYLDLEKYVLENGTQKGDRTGTGTISTFGYQMRFDLQEGFPIMTTKRVPFKLVVSELLWFLHGDTNIRYLLQHNNNIWNEWAFERFVKSADYKGEDMTDFGLRAERDPAFKEVYQAEMEKFKTRILEDETFANKYGELGNIYGKQWREWKTSQGETIDQLADLIEMIKTNPNSRRLIVSAWNPEDIPNMALPPCHSLFQFYVADGKLSCQLYQRSADIFLGVPFNIASYALLTHLIAREVGLDVGEFIHTMGDAHLYNNHIEQVKEQLSRTPHALPKLVLSDKPATIFDFEVADISLDGYNPDPAIKAPISV.

DUMP contacts are provided by residues arginine 21 and 176–177 (RR). Cysteine 196 acts as the Nucleophile in catalysis. DUMP is bound by residues 216 to 219 (RSAD), asparagine 227, and 257 to 259 (HLY). Aspartate 219 contributes to the (6R)-5,10-methylene-5,6,7,8-tetrahydrofolate binding site. Serine 313 contacts (6R)-5,10-methylene-5,6,7,8-tetrahydrofolate.

Belongs to the thymidylate synthase family. Bacterial-type ThyA subfamily. In terms of assembly, homodimer.

It localises to the cytoplasm. It carries out the reaction dUMP + (6R)-5,10-methylene-5,6,7,8-tetrahydrofolate = 7,8-dihydrofolate + dTMP. Its pathway is pyrimidine metabolism; dTTP biosynthesis. In terms of biological role, catalyzes the reductive methylation of 2'-deoxyuridine-5'-monophosphate (dUMP) to 2'-deoxythymidine-5'-monophosphate (dTMP) while utilizing 5,10-methylenetetrahydrofolate (mTHF) as the methyl donor and reductant in the reaction, yielding dihydrofolate (DHF) as a by-product. This enzymatic reaction provides an intracellular de novo source of dTMP, an essential precursor for DNA biosynthesis. The protein is Thymidylate synthase of Listeria innocua serovar 6a (strain ATCC BAA-680 / CLIP 11262).